Here is a 359-residue protein sequence, read N- to C-terminus: Fructose-bisphosphate aldolase class 2 (359 aa).

Ser-61 is a D-glyceraldehyde 3-phosphate binding site. Asp-110 functions as the Proton donor in the catalytic mechanism. Zn(2+)-binding residues include His-111, Asp-145, Glu-175, and His-227. A dihydroxyacetone phosphate-binding site is contributed by Gly-228. His-265 contributes to the Zn(2+) binding site. Dihydroxyacetone phosphate is bound by residues 266 to 268 (GGS) and 287 to 290 (NIDT).

It belongs to the class II fructose-bisphosphate aldolase family. Zn(2+) is required as a cofactor.

The enzyme catalyses beta-D-fructose 1,6-bisphosphate = D-glyceraldehyde 3-phosphate + dihydroxyacetone phosphate. It functions in the pathway carbohydrate degradation; glycolysis; D-glyceraldehyde 3-phosphate and glycerone phosphate from D-glucose: step 4/4. In terms of biological role, catalyzes the aldol condensation of dihydroxyacetone phosphate (DHAP or glycerone-phosphate) with glyceraldehyde 3-phosphate (G3P) to form fructose 1,6-bisphosphate (FBP) in gluconeogenesis and the reverse reaction in glycolysis. The protein is Fructose-bisphosphate aldolase class 2 (fbaA) of Buchnera aphidicola subsp. Schizaphis graminum (strain Sg).